The primary structure comprises 311 residues: Olfactory receptor 10G8 (311 aa).

The Extracellular segment spans residues 1–23; it reads MSNASLLTAFILMGLPHAPALDA. Asn3 is a glycosylation site (N-linked (GlcNAc...) asparagine). Residues 24 to 44 form a helical membrane-spanning segment; sequence PLFGVFLVVYVLTVLGNLLIL. Residues 45–52 are Cytoplasmic-facing; that stretch reads LVIRVDSH. The chain crosses the membrane as a helical span at residues 53-73; the sequence is LHTTMYYFLTNLSFIDMWFST. Residues 74 to 98 are Extracellular-facing; it reads VTVPKLLMTLVFPSGRAISFHSCMA. A disulfide bond links Cys96 and Cys188. Residues 99–119 form a helical membrane-spanning segment; it reads QLYFFHFLGGTECFLYRVMSC. Residues 120–138 are Cytoplasmic-facing; sequence DRYLAISYPLRYTSMMTGR. The chain crosses the membrane as a helical span at residues 139–159; the sequence is SCTLLATSTWLSGSLHSAVQA. The Extracellular portion of the chain corresponds to 160–196; the sequence is ILTFHLPYCGPNWIQHYLCDAPPILKLACADTSAIET. A helical membrane pass occupies residues 197–216; the sequence is VIFVTVGIVASGCFVLIVLS. At 217–236 the chain is on the cytoplasmic side; that stretch reads YVSIVCSILRIRTSEGKHRA. The chain crosses the membrane as a helical span at residues 237–257; the sequence is FQTCASHCIVVLCFFGPGLFI. Over 258–268 the chain is Extracellular; that stretch reads YLRPGSRKAVD. The chain crosses the membrane as a helical span at residues 269–289; that stretch reads GVVAVFYTVLTPLLNPVVYTL. The Cytoplasmic segment spans residues 290–311; it reads RNKEVKKALLKLKDKVAHSQSK.

Belongs to the G-protein coupled receptor 1 family.

The protein resides in the cell membrane. Odorant receptor. The polypeptide is Olfactory receptor 10G8 (OR10G8) (Homo sapiens (Human)).